The chain runs to 239 residues: 1-(5-phosphoribosyl)-5-[(5-phosphoribosylamino)methylideneamino] imidazole-4-carboxamide isomerase (239 aa).

Asp8 functions as the Proton acceptor in the catalytic mechanism. Catalysis depends on Asp129, which acts as the Proton donor.

It belongs to the HisA/HisF family.

It localises to the cytoplasm. The catalysed reaction is 1-(5-phospho-beta-D-ribosyl)-5-[(5-phospho-beta-D-ribosylamino)methylideneamino]imidazole-4-carboxamide = 5-[(5-phospho-1-deoxy-D-ribulos-1-ylimino)methylamino]-1-(5-phospho-beta-D-ribosyl)imidazole-4-carboxamide. The protein operates within amino-acid biosynthesis; L-histidine biosynthesis; L-histidine from 5-phospho-alpha-D-ribose 1-diphosphate: step 4/9. The sequence is that of 1-(5-phosphoribosyl)-5-[(5-phosphoribosylamino)methylideneamino] imidazole-4-carboxamide isomerase from Bacillus cytotoxicus (strain DSM 22905 / CIP 110041 / 391-98 / NVH 391-98).